We begin with the raw amino-acid sequence, 384 residues long: Ribonucleoside-diphosphate reductase small chain (384 aa).

Positions 130, 161, and 164 each coordinate Fe cation. Residue Tyr-168 is part of the active site. Glu-224, Glu-258, and His-261 together coordinate Fe cation.

The protein belongs to the ribonucleoside diphosphate reductase small chain family. As to quaternary structure, heterodimer of a large and a small subunit. Fe cation serves as cofactor.

It carries out the reaction a 2'-deoxyribonucleoside 5'-diphosphate + [thioredoxin]-disulfide + H2O = a ribonucleoside 5'-diphosphate + [thioredoxin]-dithiol. Functionally, provides the precursors necessary for DNA synthesis. Catalyzes the biosynthesis of deoxyribonucleotides from the corresponding ribonucleotides. The sequence is that of Ribonucleoside-diphosphate reductase small chain from Spisula solidissima (Atlantic surf-clam).